Here is a 450-residue protein sequence, read N- to C-terminus: MSSHGAPIPMTSSACGPLTGEARVPGDKSISHRSLILGALSVGETRISGLLEGQDVLDTAKAMRAFGATVTDHGGGEWSVHGVGVGGFAEPDGVIDCGNSGTGVRLIMGAMATSPISATFTGDASLNGRPMARVTDPLALFGAQSYGRQGGRLPMTVVGAAEPVPVTYTVPVPSAQVKSAVLLAGLNAPGQTVVIEAEATRDHTERMLAGFGAEISVEDADEGRVITLTGQPELKSQKIDVPRDPSSAAFPVCAALIVPGSDVLVPGIGLNPTRAGLFTTLREMGADLTYENERVEGGEPVADLRARFSPDLTGIEVPPARAASMIDEYPVLSVVASFARGDTVMRGVKELRVKESDRIDAMASGLRANGVAVEDGPDWWVVTGRGHGNVAGGATCASFLDHRIAMSFLVMGMATQKPVTVDDAGPIATSFPIFEPLMAQLGARIQRDNG.

The tract at residues 1-23 (MSSHGAPIPMTSSACGPLTGEAR) is disordered. Residues K28, S29, and R33 each coordinate 3-phosphoshikimate. Residue K28 participates in phosphoenolpyruvate binding. The phosphoenolpyruvate site is built by G101 and R129. S174, Q176, D327, and K354 together coordinate 3-phosphoshikimate. Residue Q176 participates in phosphoenolpyruvate binding. The Proton acceptor role is filled by D327. Positions 358 and 403 each coordinate phosphoenolpyruvate.

Belongs to the EPSP synthase family. In terms of assembly, monomer.

It localises to the cytoplasm. It carries out the reaction 3-phosphoshikimate + phosphoenolpyruvate = 5-O-(1-carboxyvinyl)-3-phosphoshikimate + phosphate. It participates in metabolic intermediate biosynthesis; chorismate biosynthesis; chorismate from D-erythrose 4-phosphate and phosphoenolpyruvate: step 6/7. Functionally, catalyzes the transfer of the enolpyruvyl moiety of phosphoenolpyruvate (PEP) to the 5-hydroxyl of shikimate-3-phosphate (S3P) to produce enolpyruvyl shikimate-3-phosphate and inorganic phosphate. The chain is 3-phosphoshikimate 1-carboxyvinyltransferase from Roseobacter denitrificans (strain ATCC 33942 / OCh 114) (Erythrobacter sp. (strain OCh 114)).